We begin with the raw amino-acid sequence, 130 residues long: MTANDPLSDALSGIDNAESVGHLTHTVAPASNMVGSVLEVFYDRGYIDGFEFVDNGKAGRFEVELKGAINECGPVNPRYSVGADGFEQWEKRYLPARDYGSLVVTTSHGIMSHYEAREAGIGGQVIAYVY.

Belongs to the universal ribosomal protein uS8 family. Part of the 30S ribosomal subunit.

In terms of biological role, one of the primary rRNA binding proteins, it binds directly to 16S rRNA central domain where it helps coordinate assembly of the platform of the 30S subunit. The protein is Small ribosomal subunit protein uS8 of Halobacterium salinarum (strain ATCC 29341 / DSM 671 / R1).